The sequence spans 144 residues: L-fucose mutarotase (144 aa).

His22 serves as the catalytic Proton donor. Substrate-binding positions include Asp30, Arg109, and 131 to 133 (YGN).

It belongs to the RbsD / FucU family. FucU mutarotase subfamily. Homodecamer.

It is found in the cytoplasm. It catalyses the reaction alpha-L-fucose = beta-L-fucose. Its pathway is carbohydrate metabolism; L-fucose metabolism. In terms of biological role, involved in the anomeric conversion of L-fucose. This is L-fucose mutarotase from Histophilus somni (strain 129Pt) (Haemophilus somnus).